The sequence spans 296 residues: Small ribosomal subunit biogenesis GTPase RsgA (296 aa).

The region spanning 63–224 (KNQLVRPMVA…IADTPGFSSY (162 aa)) is the CP-type G domain. Residues 112–115 (SKTD) and 167–175 (GQTGAGKST) contribute to the GTP site. Residues C248, C253, H255, and C261 each coordinate Zn(2+).

This sequence belongs to the TRAFAC class YlqF/YawG GTPase family. RsgA subfamily. As to quaternary structure, monomer. Associates with 30S ribosomal subunit, binds 16S rRNA. Requires Zn(2+) as cofactor.

It localises to the cytoplasm. One of several proteins that assist in the late maturation steps of the functional core of the 30S ribosomal subunit. Helps release RbfA from mature subunits. May play a role in the assembly of ribosomal proteins into the subunit. Circularly permuted GTPase that catalyzes slow GTP hydrolysis, GTPase activity is stimulated by the 30S ribosomal subunit. This Limosilactobacillus fermentum (strain NBRC 3956 / LMG 18251) (Lactobacillus fermentum) protein is Small ribosomal subunit biogenesis GTPase RsgA.